A 102-amino-acid polypeptide reads, in one-letter code: Glutaredoxin-C14 (102 aa).

The Glutaredoxin domain maps to 1-101; that stretch reads MDKVMRMSSE…PLIKPYQSFH (101 aa). A disulfide bond links cysteine 21 and cysteine 24.

It belongs to the glutaredoxin family. CC-type subfamily.

The protein localises to the cytoplasm. In terms of biological role, has a glutathione-disulfide oxidoreductase activity in the presence of NADPH and glutathione reductase. Reduces low molecular weight disulfides and proteins. The polypeptide is Glutaredoxin-C14 (GRXC14) (Arabidopsis thaliana (Mouse-ear cress)).